A 601-amino-acid polypeptide reads, in one-letter code: DNA mismatch repair protein MutL (601 aa).

The protein belongs to the DNA mismatch repair MutL/HexB family.

This protein is involved in the repair of mismatches in DNA. It is required for dam-dependent methyl-directed DNA mismatch repair. May act as a 'molecular matchmaker', a protein that promotes the formation of a stable complex between two or more DNA-binding proteins in an ATP-dependent manner without itself being part of a final effector complex. The sequence is that of DNA mismatch repair protein MutL from Listeria monocytogenes serovar 1/2a (strain ATCC BAA-679 / EGD-e).